The primary structure comprises 113 residues: Hydrogenase maturation factor HypA (113 aa).

His2 serves as a coordination point for Ni(2+). Zn(2+) contacts are provided by Cys73, Cys76, Cys89, and Cys92.

The protein belongs to the HypA/HybF family.

Functionally, involved in the maturation of [NiFe] hydrogenases. Required for nickel insertion into the metal center of the hydrogenase. This is Hydrogenase maturation factor HypA from Alkalilimnicola ehrlichii (strain ATCC BAA-1101 / DSM 17681 / MLHE-1).